Here is a 488-residue protein sequence, read N- to C-terminus: Glutamyl-tRNA(Gln) amidotransferase subunit A (488 aa).

Active-site charge relay system residues include lysine 77 and serine 152. The Acyl-ester intermediate role is filled by serine 176.

It belongs to the amidase family. GatA subfamily. As to quaternary structure, heterotrimer of A, B and C subunits.

It catalyses the reaction L-glutamyl-tRNA(Gln) + L-glutamine + ATP + H2O = L-glutaminyl-tRNA(Gln) + L-glutamate + ADP + phosphate + H(+). Its function is as follows. Allows the formation of correctly charged Gln-tRNA(Gln) through the transamidation of misacylated Glu-tRNA(Gln) in organisms which lack glutaminyl-tRNA synthetase. The reaction takes place in the presence of glutamine and ATP through an activated gamma-phospho-Glu-tRNA(Gln). The polypeptide is Glutamyl-tRNA(Gln) amidotransferase subunit A (Streptococcus equi subsp. zooepidemicus (strain H70)).